A 244-amino-acid polypeptide reads, in one-letter code: 3-deoxy-manno-octulosonate cytidylyltransferase (244 aa).

This sequence belongs to the KdsB family.

The protein localises to the cytoplasm. It catalyses the reaction 3-deoxy-alpha-D-manno-oct-2-ulosonate + CTP = CMP-3-deoxy-beta-D-manno-octulosonate + diphosphate. It functions in the pathway nucleotide-sugar biosynthesis; CMP-3-deoxy-D-manno-octulosonate biosynthesis; CMP-3-deoxy-D-manno-octulosonate from 3-deoxy-D-manno-octulosonate and CTP: step 1/1. The protein operates within bacterial outer membrane biogenesis; lipopolysaccharide biosynthesis. In terms of biological role, activates KDO (a required 8-carbon sugar) for incorporation into bacterial lipopolysaccharide in Gram-negative bacteria. The chain is 3-deoxy-manno-octulosonate cytidylyltransferase from Anaeromyxobacter sp. (strain Fw109-5).